A 105-amino-acid polypeptide reads, in one-letter code: Small ribosomal subunit protein uS10 (105 aa).

This sequence belongs to the universal ribosomal protein uS10 family. As to quaternary structure, part of the 30S ribosomal subunit.

In terms of biological role, involved in the binding of tRNA to the ribosomes. This is Small ribosomal subunit protein uS10 from Chlamydia pneumoniae (Chlamydophila pneumoniae).